The following is a 396-amino-acid chain: N-terminal EF-hand calcium-binding protein 3 (396 aa).

A compositionally biased stretch (pro residues) spans 14-34; it reads PPAPQPQPQTPRHPQLAPDPG. The segment at 14 to 36 is disordered; it reads PPAPQPQPQTPRHPQLAPDPGPA. An EF-hand domain is found at 36–71; it reads AGHTLFQDVFRRADKNDDGKLSFEEFQNYFADGVLS. Ca(2+) contacts are provided by Asp49, Asn51, Asp53, Lys55, and Glu60. Positions 181–190 are required for interaction with APBA3; that stretch reads VEAQSRLCGS. A disordered region spans residues 197-220; that stretch reads ALRSVSRSSTWSPGSSDTGRSSEA. Polar residues predominate over residues 206–217; it reads TWSPGSSDTGRS. The ABM domain maps to 296–385; that stretch reads LMAQRQVQVA…RAPDTLTTVF (90 aa).

As to quaternary structure, interacts with the N-terminal domain of APBA2. Interacts with NEK2. Interacts with APBA3; APBA3 seems to mediate the interaction between NECAB3 and HIF1AN. In terms of processing, phosphorylated by NEK2. As to expression, strongly expressed in heart and skeletal muscle, moderately in brain and pancreas.

The protein resides in the golgi apparatus. Inhibits the interaction of APBA2 with amyloid-beta precursor protein (APP), and hence allows formation of amyloid-beta. May enhance the activity of HIF1A and thus promote glycolysis under normoxic conditions; the function requires its ABM domain and may implicate the stabilization of the interaction between HIF1AN and APBA3. This Homo sapiens (Human) protein is N-terminal EF-hand calcium-binding protein 3 (NECAB3).